The sequence spans 313 residues: Protein HEXIM2 (313 aa).

Positions 1–13 are enriched in polar residues; sequence MATVNHTNCNTAS. The segment at 1-78 is disordered; the sequence is MATVNHTNCN…RGSRTQSPGG (78 aa). Phosphoserine is present on residues S28, S52, S75, and S80. The span at 64-77 shows a compositional bias: polar residues; sequence SSCNIRGSRTQSPG. Disordered regions lie at residues 111-139, 155-194, and 267-313; these read EKQQ…PLAP, PNLD…DFSE, and QENE…AGDR. Basic and acidic residues predominate over residues 112 to 131; sequence KQQRDERQSQRASRVREEMF. Positions 139 to 142 are interaction with P-TEFb; the sequence is PYNT. The span at 179–194 shows a compositional bias: basic and acidic residues; the sequence is GQGRAHGEFQQRDFSE. A coiled-coil region spans residues 207–276; sequence RSKQELVRDY…QENEMWNREG (70 aa). The segment at 225-286 is interaction with CCNT1, HEXIM1 and HEXIM2; the sequence is QAEQETRRLR…GYCDQEKPAS (62 aa).

It belongs to the HEXIM family. In terms of assembly, homooligomer and heterooligomer with HEXIM1; probably dimeric. Core component of the 7SK RNP complex, at least composed of 7SK RNA, LARP7, MEPCE, HEXIM1 (or HEXIM2) and P-TEFb (composed of CDK9 and CCNT1/cyclin-T1). Interacts with CCNT2.

The protein resides in the nucleus. Functionally, transcriptional regulator which functions as a general RNA polymerase II transcription inhibitor. Core component of the 7SK RNP complex: in cooperation with 7SK snRNA sequesters P-TEFb in a large inactive 7SK snRNP complex preventing RNA polymerase II phosphorylation and subsequent transcriptional elongation. The sequence is that of Protein HEXIM2 (Hexim2) from Mus musculus (Mouse).